A 426-amino-acid polypeptide reads, in one-letter code: GTPase Obg (426 aa).

In terms of domain architecture, Obg spans 1-158; the sequence is MFVDQVSVYV…RNIKVELKLI (158 aa). Disordered regions lie at residues 66 to 86 and 119 to 146; these read GKRG…DPLV and GGRG…GEPG. An OBG-type G domain is found at 159–329; that stretch reads ADVGLVGFPS…LLFAIADKLE (171 aa). GTP is bound by residues 165-172, 190-194, 212-215, 282-285, and 310-312; these read GFPSVGKS, FTTLS, DLPG, NKMD, and SAL. Mg(2+) contacts are provided by Ser172 and Thr192. The region spanning 348-426 is the OCT domain; sequence RYQKEEDPFH…LLEYEFEFIE (79 aa).

Belongs to the TRAFAC class OBG-HflX-like GTPase superfamily. OBG GTPase family. In terms of assembly, monomer. Mg(2+) serves as cofactor.

The protein localises to the cytoplasm. An essential GTPase which binds GTP, GDP and possibly (p)ppGpp with moderate affinity, with high nucleotide exchange rates and a fairly low GTP hydrolysis rate. Plays a role in control of the cell cycle, stress response, ribosome biogenesis and in those bacteria that undergo differentiation, in morphogenesis control. This Oceanobacillus iheyensis (strain DSM 14371 / CIP 107618 / JCM 11309 / KCTC 3954 / HTE831) protein is GTPase Obg.